Here is a 322-residue protein sequence, read N- to C-terminus: Quinolinate synthase (322 aa).

Residues histidine 36 and serine 53 each coordinate iminosuccinate. Cysteine 98 contributes to the [4Fe-4S] cluster binding site. Iminosuccinate is bound by residues 124 to 126 (YIN) and serine 141. Residue cysteine 184 coordinates [4Fe-4S] cluster. Iminosuccinate-binding positions include 210 to 212 (HPE) and threonine 227. Residue cysteine 278 coordinates [4Fe-4S] cluster.

Belongs to the quinolinate synthase family. Type 2 subfamily. [4Fe-4S] cluster serves as cofactor.

Its subcellular location is the cytoplasm. The enzyme catalyses iminosuccinate + dihydroxyacetone phosphate = quinolinate + phosphate + 2 H2O + H(+). The protein operates within cofactor biosynthesis; NAD(+) biosynthesis; quinolinate from iminoaspartate: step 1/1. Its function is as follows. Catalyzes the condensation of iminoaspartate with dihydroxyacetone phosphate to form quinolinate. This is Quinolinate synthase from Chloroherpeton thalassium (strain ATCC 35110 / GB-78).